Reading from the N-terminus, the 250-residue chain is Triosephosphate isomerase (250 aa).

Residues Asn10 and Lys12 each coordinate substrate. Catalysis depends on His94, which acts as the Electrophile. The active-site Proton acceptor is the Glu167.

Belongs to the triosephosphate isomerase family. In terms of assembly, homodimer.

It is found in the cytoplasm. The catalysed reaction is D-glyceraldehyde 3-phosphate = dihydroxyacetone phosphate. It participates in carbohydrate biosynthesis; gluconeogenesis. The protein operates within carbohydrate degradation; glycolysis; D-glyceraldehyde 3-phosphate from glycerone phosphate: step 1/1. This chain is Triosephosphate isomerase, found in Taenia solium (Pork tapeworm).